Consider the following 642-residue polypeptide: Arginine--tRNA ligase (642 aa).

The 'HIGH' region motif lies at 133–143 (VNPTKPLHMGH).

Belongs to the class-I aminoacyl-tRNA synthetase family.

It is found in the cytoplasm. The catalysed reaction is tRNA(Arg) + L-arginine + ATP = L-arginyl-tRNA(Arg) + AMP + diphosphate. This Thermococcus kodakarensis (strain ATCC BAA-918 / JCM 12380 / KOD1) (Pyrococcus kodakaraensis (strain KOD1)) protein is Arginine--tRNA ligase.